The sequence spans 346 residues: Thioredoxin domain-containing protein R362 (346 aa).

The Thioredoxin domain occupies 212–345 (LTNLSNTEAN…IVKFIDETMS (134 aa)).

Its subcellular location is the virion. The protein is Thioredoxin domain-containing protein R362 of Acanthamoeba polyphaga (Amoeba).